The chain runs to 438 residues: 23S rRNA (uracil(1939)-C(5))-methyltransferase RlmD (438 aa).

One can recognise a TRAM domain in the interval 9-68 (RRTVNRHIITVTADNLDAQGQGVARHQGKTIFVAGLLPGEQAQVQLTEEKRQFAKAKLVK). Cys-81, Cys-87, Cys-90, and Cys-168 together coordinate [4Fe-4S] cluster. S-adenosyl-L-methionine contacts are provided by Gln-272, Phe-301, Asn-306, Glu-322, Asn-349, and Asp-370. Catalysis depends on Cys-396, which acts as the Nucleophile.

Belongs to the class I-like SAM-binding methyltransferase superfamily. RNA M5U methyltransferase family. RlmD subfamily.

It carries out the reaction uridine(1939) in 23S rRNA + S-adenosyl-L-methionine = 5-methyluridine(1939) in 23S rRNA + S-adenosyl-L-homocysteine + H(+). Functionally, catalyzes the formation of 5-methyl-uridine at position 1939 (m5U1939) in 23S rRNA. This Photorhabdus laumondii subsp. laumondii (strain DSM 15139 / CIP 105565 / TT01) (Photorhabdus luminescens subsp. laumondii) protein is 23S rRNA (uracil(1939)-C(5))-methyltransferase RlmD.